We begin with the raw amino-acid sequence, 363 residues long: DNA replication and repair protein RecF (363 aa).

Position 31-38 (glycine 31–threonine 38) interacts with ATP.

It belongs to the RecF family.

Its subcellular location is the cytoplasm. In terms of biological role, the RecF protein is involved in DNA metabolism; it is required for DNA replication and normal SOS inducibility. RecF binds preferentially to single-stranded, linear DNA. It also seems to bind ATP. The polypeptide is DNA replication and repair protein RecF (Nitrosococcus oceani (strain ATCC 19707 / BCRC 17464 / JCM 30415 / NCIMB 11848 / C-107)).